Consider the following 153-residue polypeptide: Two-component response regulator ARR17 (153 aa).

Positions 21-149 (HVLAVDDNLI…DVEKLKCHLL (129 aa)) constitute a Response regulatory domain. A 4-aspartylphosphate modification is found at D82.

The protein belongs to the ARR family. Type-A subfamily. Post-translationally, two-component system major event consists of a His-to-Asp phosphorelay between a sensor histidine kinase (HK) and a response regulator (RR). In plants, the His-to-Asp phosphorelay involves an additional intermediate named Histidine-containing phosphotransfer protein (HPt). This multistep phosphorelay consists of a His-Asp-His-Asp sequential transfer of a phosphate group between first a His and an Asp of the HK protein, followed by the transfer to a conserved His of the HPt protein and finally the transfer to an Asp in the receiver domain of the RR protein.

It is found in the nucleus. In terms of biological role, functions as a response regulator involved in His-to-Asp phosphorelay signal transduction system. Phosphorylation of the Asp residue in the receiver domain activates the ability of the protein to promote the transcription of target genes. Type-A response regulators seem to act as negative regulators of the cytokinin signaling. In Arabidopsis thaliana (Mouse-ear cress), this protein is Two-component response regulator ARR17 (ARR17).